Reading from the N-terminus, the 557-residue chain is Copine-6 (557 aa).

2 consecutive C2 domains span residues 2–127 and 134–263; these read SDPE…TKPL and TAGK…MQWD. Positions 167, 173, 229, 231, and 237 each coordinate Ca(2+). The segment at 244 to 303 is linker region; sequence STFQEMQEGTANPGQEMQWDCINPKYRDKKKNYKSSGTVVLAQCTVEKVHTFLDYIMGGC. The 221-residue stretch at 306-526 folds into the VWFA domain; sequence SFTVAIDFTA…ALAKRVLAEV (221 aa).

Belongs to the copine family. Interacts (via second C2 domain) with OS9 (via C-terminus); this interaction occurs in a calcium-dependent manner in vitro. May interact with NECAB1. Ca(2+) is required as a cofactor.

The protein localises to the cytoplasm. Its subcellular location is the cell membrane. It localises to the endosome. It is found in the cytoplasmic vesicle. The protein resides in the clathrin-coated vesicle. The protein localises to the perikaryon. Its subcellular location is the cell projection. It localises to the dendrite. Functionally, calcium-dependent phospholipid-binding protein that plays a role in calcium-mediated intracellular processes. Binds phospholipid membranes in a calcium-dependent manner. Plays a role in dendrite formation by melanocytes. In Pongo abelii (Sumatran orangutan), this protein is Copine-6.